The primary structure comprises 83 residues: Bowman-Birk type proteinase inhibitor (83 aa).

7 disulfides stabilise this stretch: C18–C72, C19–C34, C22–C68, C24–C32, C42–C49, C46–C61, and C51–C59.

Belongs to the Bowman-Birk serine protease inhibitor family.

The polypeptide is Bowman-Birk type proteinase inhibitor (Phaseolus lunatus (Lima bean)).